The following is a 474-amino-acid chain: Pyruvate kinase (474 aa).

Arg33 lines the substrate pocket. Residues Asn35, Ser37, and Asp67 each contribute to the K(+) site. Residue 35-38 participates in ATP binding; it reads NFSH. The ATP site is built by Arg74 and Lys155. Glu220 lines the Mg(2+) pocket. Positions 243, 244, and 276 each coordinate substrate. Asp244 lines the Mg(2+) pocket.

The protein belongs to the pyruvate kinase family. In terms of assembly, homotetramer. Mg(2+) serves as cofactor. The cofactor is K(+).

It catalyses the reaction pyruvate + ATP = phosphoenolpyruvate + ADP + H(+). Its pathway is carbohydrate degradation; glycolysis; pyruvate from D-glyceraldehyde 3-phosphate: step 5/5. The polypeptide is Pyruvate kinase (pyk) (Corynebacterium efficiens (strain DSM 44549 / YS-314 / AJ 12310 / JCM 11189 / NBRC 100395)).